Reading from the N-terminus, the 464-residue chain is NADH-quinone oxidoreductase subunit N 1 (464 aa).

14 helical membrane-spanning segments follow: residues 6 to 26 (ILPEAILAIGILTVFILELFL), 33 to 53 (FLSVLAFIFVVLSGYSIFFVN), 65 to 85 (VDALNLIGKLFILAVTGFVLL), 98 to 118 (YGELPYLYLIATLGLMVMISS), 122 to 142 (AIIFTGLELASITMYILVGLF), 155 to 175 (YLVIGTTGTSMYALGSALVYA), 192 to 212 (FALGVILIISALALKVSAVPF), 237 to 257 (IGMYFLFVKLTMYLFSAFPDW), 259 to 279 (YVVMLLAVLSMFYGNIVAYAQ), 285 to 305 (LLAYSSIAHAGYFLTALTAVD), 312 to 332 (LLFYVFVYALATVGAFTVLAI), 356 to 376 (LASMLALFLFALIGIPPAAVF), 401 to 421 (ASLISAGYYLKVIVYMFLYSG), and 436 to 456 (FTVLGTAFLVIFFGLFPHVVL).

It belongs to the complex I subunit 2 family. NDH-1 is composed of 14 different subunits. Subunits NuoA, H, J, K, L, M, N constitute the membrane sector of the complex.

It is found in the cell inner membrane. The enzyme catalyses a quinone + NADH + 5 H(+)(in) = a quinol + NAD(+) + 4 H(+)(out). NDH-1 shuttles electrons from NADH, via FMN and iron-sulfur (Fe-S) centers, to quinones in the respiratory chain. The immediate electron acceptor for the enzyme in this species is believed to be ubiquinone. Couples the redox reaction to proton translocation (for every two electrons transferred, four hydrogen ions are translocated across the cytoplasmic membrane), and thus conserves the redox energy in a proton gradient. The sequence is that of NADH-quinone oxidoreductase subunit N 1 from Aquifex aeolicus (strain VF5).